Consider the following 449-residue polypeptide: GTPase Der (449 aa).

EngA-type G domains are found at residues 2-169 (FTVA…QLPP) and 180-355 (VRFC…EQLT). GTP-binding positions include 8 to 15 (GRPNVGKS), 55 to 59 (DTGGL), 118 to 121 (NKSE), 186 to 193 (GKPNVGKS), 233 to 237 (DTAGI), and 298 to 301 (NKWD). Residues 356–440 (KKISTSLLND…PITLYFKSKN (85 aa)) form the KH-like domain.

It belongs to the TRAFAC class TrmE-Era-EngA-EngB-Septin-like GTPase superfamily. EngA (Der) GTPase family. Associates with the 50S ribosomal subunit.

In terms of biological role, GTPase that plays an essential role in the late steps of ribosome biogenesis. The chain is GTPase Der from Mycoplasma pneumoniae (strain ATCC 29342 / M129 / Subtype 1) (Mycoplasmoides pneumoniae).